The sequence spans 337 residues: Tetraacyldisaccharide 4'-kinase (337 aa).

V56–T63 contributes to the ATP binding site.

The protein belongs to the LpxK family.

It catalyses the reaction a lipid A disaccharide + ATP = a lipid IVA + ADP + H(+). It participates in glycolipid biosynthesis; lipid IV(A) biosynthesis; lipid IV(A) from (3R)-3-hydroxytetradecanoyl-[acyl-carrier-protein] and UDP-N-acetyl-alpha-D-glucosamine: step 6/6. Transfers the gamma-phosphate of ATP to the 4'-position of a tetraacyldisaccharide 1-phosphate intermediate (termed DS-1-P) to form tetraacyldisaccharide 1,4'-bis-phosphate (lipid IVA). In Rhodospirillum centenum (strain ATCC 51521 / SW), this protein is Tetraacyldisaccharide 4'-kinase.